The primary structure comprises 1178 residues: MSTIEFETIGSRLQSLEAKLQAQNESHDQIVLSGARGPVVSGSVPSARVPPLATSASAATSATHAPSLGAGSVSGSGISIAQRPAPPVPHATPFGSASASSSSSSASAFASAAPATGTFGGTYTPPTTRVSRATPTLPMLSSGPGGGLNRTRPVILPLPTPPHPPVSETDMKLKIIMEQTGKLNINGRQYPTDINDLKHLGDLGNGTSGNVVKMMHLSSNTIIAVKQMRRTGNAEENKRILMDLDVVLKSHDCKYIVKCLGCFVRDPDVWICMELMSMCFDKLLKLSKKPVPEQILGKVTVATVNALSYLKDKHGVIHRDVKPSNILIDERGNIKLCDFGISGRLVDSKANTRSAGCAAYMAPERIDPKKPKYDIRADVWSLGITLVELATARSPYEGCNTDFEVLTKVLDSEPPCLPYGEGYNFSQQFRDFVIKCLTKNHQDRPKYPELLAQPFIRIYESAKVDVPNWFQSIKDNRLRANGDPTLQRATATGSAIGSGAGSLAGSGSGSAGGAVKYGRATTYAGQSPTNPQKTIKPTQIPSYQQQQSQFFMQSATQLPQTTTTTPTATTNCFGGSGNGNGRGNGSGGSGNGSGSSSSASPLSPPSAGIGDLNRLYRKSPFMQRKLSNGSHHPHYKYNDESPKKESMFSSIGQSILRNLTTSPFSQKKHNSTATTIPLPHNNQTLITDAATAAAAAATATTPPNIAATVLTTTPTTTPTWRLPTENSQAYDSCDSSSNATTTTLNLGLSSPSPSLPRKQFPTESPTLQLTSQQQQQPQRLQPGNQSPIVLQRFYHQQNQLREKEAAERYQQQRQQPPVGVTSTNPFHSNYVPPPPSTHSTSSQSSTQSTCSQIAINPASISPSSGSGTGNMAGLGIGSAPASGLGAAGHFGAGGTGEQLQYQPLPIAAEATGTSPTLQSRSPEQQSDYGGNGNMVASKLSKLYARRQLLGQSSSSGASNSSLDGCSREQHDAGWFNTLAGAMKRQFATYVKTQLNSTATSPVASSMDRDQEPVHPQPPAYRSVVNNGSGGKSYYYRTLSAASSSSNTSQSTSPTTEPLPGGGTSSFLRRYASSGPGGSISTPPSPHILAGLDRRHRSPDPPPRYNRGQSPLLLRKNLLELSGQPPGSPLLHRRYVSASPPLPPPRRGSESVPGSPQHFRTRIHYTPEPQRRIYRTIDQ.

Disordered stretches follow at residues 74–103 and 115–148; these read SGSGISIAQRPAPPVPHATPFGSASASSSS and ATGTFGGTYTPPTTRVSRATPTLPMLSSGPGGGL. Low complexity-rich tracts occupy residues 91 to 103 and 115 to 128; these read ATPFGSASASSSS and ATGTFGGTYTPPTT. Positions 197-456 constitute a Protein kinase domain; sequence LKHLGDLGNG…YPELLAQPFI (260 aa). ATP is bound by residues 203 to 211 and Lys-226; that span reads LGNGTSGNV. The active-site Proton acceptor is Asp-320. Ser-348 is modified (phosphoserine). Thr-352 is subject to Phosphothreonine. Residues 522–648 are disordered; sequence TYAGQSPTNP…DESPKKESMF (127 aa). A compositionally biased stretch (polar residues) spans 523-543; that stretch reads YAGQSPTNPQKTIKPTQIPSY. Low complexity predominate over residues 544–570; that stretch reads QQQQSQFFMQSATQLPQTTTTTPTATT. The span at 574–593 shows a compositional bias: gly residues; the sequence is GGSGNGNGRGNGSGGSGNGS. Residues 594 to 608 are compositionally biased toward low complexity; it reads GSSSSASPLSPPSAG. Residues 636 to 646 are compositionally biased toward basic and acidic residues; it reads KYNDESPKKES. A phosphoserine mark is found at Ser-646 and Ser-662. 6 disordered regions span residues 715–783, 797–851, 912–933, 999–1026, 1042–1108, and 1122–1178; these read TTTP…LQPG, QNQL…STCS, GTSPTLQSRSPEQQSDYGGNGN, TSPVASSMDRDQEPVHPQPPAYRSVVNN, SSSS…NRGQ, and GQPP…TIDQ. A compositionally biased stretch (polar residues) spans 724–734; the sequence is TENSQAYDSCD. 3 stretches are compositionally biased toward low complexity: residues 735 to 783, 808 to 817, and 837 to 851; these read SSSN…LQPG, RYQQQRQQPP, and THSTSSQSSTQSTCS. Positions 912–928 are enriched in polar residues; it reads GTSPTLQSRSPEQQSDY. The segment covering 1042-1055 has biased composition (low complexity); it reads SSSSNTSQSTSPTT. 2 positions are modified to phosphoserine: Ser-1150 and Ser-1154. Residues 1168 to 1178 show a composition bias toward basic and acidic residues; it reads PQRRIYRTIDQ.

The protein belongs to the protein kinase superfamily. STE Ser/Thr protein kinase family. MAP kinase kinase subfamily. MAPKK is itself dependent on Ser/Thr phosphorylation for activity catalyzed by MAP kinase kinase kinases. Post-translationally, weakly autophosphorylated.

It carries out the reaction L-seryl-[protein] + ATP = O-phospho-L-seryl-[protein] + ADP + H(+). The catalysed reaction is L-threonyl-[protein] + ATP = O-phospho-L-threonyl-[protein] + ADP + H(+). The enzyme catalyses L-tyrosyl-[protein] + ATP = O-phospho-L-tyrosyl-[protein] + ADP + H(+). Its function is as follows. Required for the epithelial cell sheet movement called dorsal closure (DC), which allows establishment of the dorsal epidermis. Controls the expression in the dorsal epithelium edges of another dorsal closure gene, puckered (puc). Phosphorylates and activates the MAP kinase bsk; bsk signal transduction pathway mediates an immune response and morphogenesis. This chain is Dual specificity mitogen-activated protein kinase kinase hemipterous (hep), found in Drosophila melanogaster (Fruit fly).